Here is a 363-residue protein sequence, read N- to C-terminus: Cellular tumor antigen p53 (363 aa).

Residues 1–29 (MEPSSETGMDPPLSQETFEDLWSLLPDPL) are transcription activation (acidic). Residues 76 to 267 (DYAGKYGLQL…RTEEDNYTKK (192 aa)) mediate DNA binding. Zn(2+) contacts are provided by cysteine 150, histidine 153, cysteine 213, and cysteine 217. Residues 248–255 (RVCACPGR) form an interaction with DNA region. Positions 257 to 290 (RRTEEDNYTKKRGLKPSGKRELAHPPSSEPPLPK) are disordered. Positions 275-292 (KRELAHPPSSEPPLPKKR) match the Bipartite nuclear localization signal motif. The oligomerization stretch occupies residues 300–331 (EEIFTLRIKGRSRYEMIKKLNDALELQESLDQ). The Nuclear export signal signature appears at 314–325 (EMIKKLNDALEL). Residues 344 to 356 (EIKPKKGKKLLVK) are basic (repression of DNA-binding).

This sequence belongs to the p53 family. As to quaternary structure, binds DNA as a homotetramer. It depends on Zn(2+) as a cofactor. Ubiquitous.

The protein resides in the cytoplasm. Its subcellular location is the nucleus. Functionally, multifunctional transcription factor that induces cell cycle arrest, DNA repair or apoptosis upon binding to its target DNA sequence. Acts as a tumor suppressor in many tumor types; induces growth arrest or apoptosis depending on the physiological circumstances and cell type. Negatively regulates cell division by controlling expression of a set of genes required for this process. One of the activated genes is an inhibitor of cyclin-dependent kinases. Apoptosis induction seems to be mediated either by stimulation of BAX and FAS antigen expression, or by repression of Bcl-2 expression. This Xenopus laevis (African clawed frog) protein is Cellular tumor antigen p53 (tp53).